Reading from the N-terminus, the 401-residue chain is Dual-specificity RNA methyltransferase RlmN (401 aa).

Catalysis depends on Glu-114, which acts as the Proton acceptor. Residues 120–365 form the Radical SAM core domain; that stretch reads DKTRGTLCVS…TMVRRTRGDD (246 aa). Cys-127 and Cys-370 are joined by a disulfide. Positions 134, 138, and 141 each coordinate [4Fe-4S] cluster. S-adenosyl-L-methionine-binding positions include 187–188, Ser-219, 241–243, and Asn-327; these read GE and SLH. The active-site S-methylcysteine intermediate is the Cys-370.

The protein belongs to the radical SAM superfamily. RlmN family. The cofactor is [4Fe-4S] cluster.

It is found in the cytoplasm. The catalysed reaction is adenosine(2503) in 23S rRNA + 2 reduced [2Fe-2S]-[ferredoxin] + 2 S-adenosyl-L-methionine = 2-methyladenosine(2503) in 23S rRNA + 5'-deoxyadenosine + L-methionine + 2 oxidized [2Fe-2S]-[ferredoxin] + S-adenosyl-L-homocysteine. It catalyses the reaction adenosine(37) in tRNA + 2 reduced [2Fe-2S]-[ferredoxin] + 2 S-adenosyl-L-methionine = 2-methyladenosine(37) in tRNA + 5'-deoxyadenosine + L-methionine + 2 oxidized [2Fe-2S]-[ferredoxin] + S-adenosyl-L-homocysteine. In terms of biological role, specifically methylates position 2 of adenine 2503 in 23S rRNA and position 2 of adenine 37 in tRNAs. m2A2503 modification seems to play a crucial role in the proofreading step occurring at the peptidyl transferase center and thus would serve to optimize ribosomal fidelity. The protein is Dual-specificity RNA methyltransferase RlmN of Stenotrophomonas maltophilia (strain K279a).